Reading from the N-terminus, the 448-residue chain is Ribosomal protein uS12 methylthiotransferase RimO (448 aa).

In terms of domain architecture, MTTase N-terminal spans 7–123 (EKVSLVSLGC…IAEIIAEKKQ (117 aa)). [4Fe-4S] cluster-binding residues include Cys-16, Cys-52, Cys-86, Cys-161, Cys-165, and Cys-168. Residues 147–377 (SSPHYTAYLK…MRTQARVSFK (231 aa)) enclose the Radical SAM core domain. The 69-residue stretch at 380-448 (RTLVDSEEDV…DYDLIGEIVD (69 aa)) folds into the TRAM domain.

It belongs to the methylthiotransferase family. RimO subfamily. [4Fe-4S] cluster serves as cofactor.

The protein resides in the cytoplasm. The enzyme catalyses L-aspartate(89)-[ribosomal protein uS12]-hydrogen + (sulfur carrier)-SH + AH2 + 2 S-adenosyl-L-methionine = 3-methylsulfanyl-L-aspartate(89)-[ribosomal protein uS12]-hydrogen + (sulfur carrier)-H + 5'-deoxyadenosine + L-methionine + A + S-adenosyl-L-homocysteine + 2 H(+). Functionally, catalyzes the methylthiolation of an aspartic acid residue of ribosomal protein uS12. In Citrifermentans bemidjiense (strain ATCC BAA-1014 / DSM 16622 / JCM 12645 / Bem) (Geobacter bemidjiensis), this protein is Ribosomal protein uS12 methylthiotransferase RimO.